We begin with the raw amino-acid sequence, 311 residues long: tRNA dimethylallyltransferase 2 (311 aa).

ATP is bound at residue 15–22 (GPTAVGKT). 17 to 22 (TAVGKT) is a substrate binding site. The interaction with substrate tRNA stretch occupies residues 40–43 (DSMQ).

This sequence belongs to the IPP transferase family. As to quaternary structure, monomer. Requires Mg(2+) as cofactor.

The enzyme catalyses adenosine(37) in tRNA + dimethylallyl diphosphate = N(6)-dimethylallyladenosine(37) in tRNA + diphosphate. Its function is as follows. Catalyzes the transfer of a dimethylallyl group onto the adenine at position 37 in tRNAs that read codons beginning with uridine, leading to the formation of N6-(dimethylallyl)adenosine (i(6)A). In Syntrophus aciditrophicus (strain SB), this protein is tRNA dimethylallyltransferase 2.